A 486-amino-acid polypeptide reads, in one-letter code: Scarecrow-like protein 15 (486 aa).

Residues 1 to 28 are disordered; it reads MKIPASSPQDTTNNNNNTNSTDSNHLSM. Residues 10–24 show a composition bias toward low complexity; sequence DTTNNNNNTNSTDSN. A GRAS domain is found at 113–485; sequence DSVDNGGFDF…RALVATSAWR (373 aa). Residues 120–179 are leucine repeat I (LRI); that stretch reads FDFIEDLIRVVDCVESDELQLAQVVLSRLNQRLRSPAGRPLQRAAFYFKEALGSFLTGSN. The segment at 198–266 is VHIID; sequence IKEYSGISPI…VSGGFLRVTA (69 aa). Positions 232–236 match the VHIID motif; that stretch reads VHVVD. Residues 278–310 form a leucine repeat II (LRII) region; it reads LVKENLTQFAAEMKIRFQIEFVLMKTFEMLSFK. The PFYRE stretch occupies residues 320–410; that stretch reads TVVLISPAIF…AFVLRPKISA (91 aa). Positions 413–485 are SAW; it reads ETAADRRHTG…RALVATSAWR (73 aa).

The protein belongs to the GRAS family. Expressed in seedlings, roots, leaves and flowers.

The protein resides in the nucleus. Functionally, probable transcription factor involved in plant development. This is Scarecrow-like protein 15 (SCL15) from Arabidopsis thaliana (Mouse-ear cress).